The sequence spans 98 residues: MSKPDRYVSFVGIDGDSNARKLVALLRRHIDDPARTNRFWELFKDKLEKINKPDETSGFSQDELYLVHAYINNIRELFETYDDQPALALLDRIEAESC.

This sequence belongs to the CowN family.

Functionally, is required to sustain N(2)-dependent growth in the presence of low levels of carbon monoxide (CO). Probably acts by protecting the N(2) fixation ability of the nitrogenase complex, which is inactivated in the presence of CO. In Trichlorobacter lovleyi (strain ATCC BAA-1151 / DSM 17278 / SZ) (Geobacter lovleyi), this protein is N(2)-fixation sustaining protein CowN.